Here is a 57-residue protein sequence, read N- to C-terminus: Ribulose bisphosphate carboxylase large chain (57 aa).

Positions 1–2 are excised as a propeptide; the sequence is MS. An N-acetylproline modification is found at Pro3. The residue at position 14 (Lys14) is an N6,N6,N6-trimethyllysine.

Belongs to the RuBisCO large chain family. Type I subfamily. Heterohexadecamer of 8 large chains and 8 small chains.

Its subcellular location is the plastid. It localises to the chloroplast. The catalysed reaction is 2 (2R)-3-phosphoglycerate + 2 H(+) = D-ribulose 1,5-bisphosphate + CO2 + H2O. It catalyses the reaction D-ribulose 1,5-bisphosphate + O2 = 2-phosphoglycolate + (2R)-3-phosphoglycerate + 2 H(+). Functionally, ruBisCO catalyzes two reactions: the carboxylation of D-ribulose 1,5-bisphosphate, the primary event in carbon dioxide fixation, as well as the oxidative fragmentation of the pentose substrate in the photorespiration process. Both reactions occur simultaneously and in competition at the same active site. This Buxus sempervirens (Common box) protein is Ribulose bisphosphate carboxylase large chain (rbcL).